We begin with the raw amino-acid sequence, 354 residues long: Guanine nucleotide-binding protein G(t) subunit alpha-2 (354 aa).

A disordered region spans residues 1–27; it reads MGSGASAEDKELAKRSKELEKKLQEDA. Gly2 is lipidated: N-myristoyl glycine. Over residues 7-27 the composition is skewed to basic and acidic residues; that stretch reads AEDKELAKRSKELEKKLQEDA. The G-alpha domain maps to 32–354; that stretch reads KTVKLLLLGA…KENLKDCGLF (323 aa). Positions 35 to 48 are G1 motif; it reads KLLLLGAGESGKST. Residues 40–47, 175–181, 200–204, 269–272, and Ala326 contribute to the GTP site; these read GAGESGKS, LRSRVKT, DVGGQ, and NKKD. Ser47 is a binding site for Mg(2+). Positions 173 to 181 are G2 motif; it reads DVLRSRVKT. Arg178 is modified (ADP-ribosylarginine; by cholera toxin). A Mg(2+)-binding site is contributed by Thr181. Residues 196-205 are G3 motif; the sequence is FRMFDVGGQR. The G4 motif stretch occupies residues 265–272; that stretch reads VLFLNKKD. Residues 324–329 form a G5 motif region; the sequence is TCATDT. Cys351 carries the ADP-ribosylcysteine; by pertussis toxin modification.

This sequence belongs to the G-alpha family. G(i/o/t/z) subfamily. In terms of assembly, g proteins are composed of 3 units; alpha, beta and gamma. The alpha chain contains the guanine nucleotide binding site. As to expression, retinal rod outer segment.

Its subcellular location is the cell projection. It localises to the cilium. The protein localises to the photoreceptor outer segment. The protein resides in the photoreceptor inner segment. In terms of biological role, guanine nucleotide-binding proteins (G proteins) are involved as modulators or transducers in various transmembrane signaling systems. Transducin is an amplifier and one of the transducers of a visual impulse that performs the coupling between rhodopsin and cGMP-phosphodiesterase. The polypeptide is Guanine nucleotide-binding protein G(t) subunit alpha-2 (GNAT2) (Homo sapiens (Human)).